Here is a 728-residue protein sequence, read N- to C-terminus: Polyribonucleotide nucleotidyltransferase (728 aa).

Asp-487 and Asp-493 together coordinate Mg(2+). The KH domain occupies 554–613 (PRIEVITVPTDKIREVIGTGGKVIREIVEKTGAKVDISDDGTIKVASSDGESIRKAIAWI). Positions 623–691 (GKIYEGTVVK…DRGKVRLSMK (69 aa)) constitute an S1 motif domain. Positions 697-707 (TGEEIVYENEP) are enriched in acidic residues. The disordered stretch occupies residues 697–728 (TGEEIVYENEPAEQPREKREGGGGRGRRRERD). The segment covering 709–718 (EQPREKREGG) has biased composition (basic and acidic residues).

The protein belongs to the polyribonucleotide nucleotidyltransferase family. Mg(2+) is required as a cofactor.

The protein localises to the cytoplasm. The catalysed reaction is RNA(n+1) + phosphate = RNA(n) + a ribonucleoside 5'-diphosphate. Its function is as follows. Involved in mRNA degradation. Catalyzes the phosphorolysis of single-stranded polyribonucleotides processively in the 3'- to 5'-direction. This is Polyribonucleotide nucleotidyltransferase from Parvibaculum lavamentivorans (strain DS-1 / DSM 13023 / NCIMB 13966).